The primary structure comprises 64 residues: Conotoxin Ts-011 (64 aa).

The signal sequence occupies residues 1–22 (MHCLPVPVILLLLIASTPSVDA). Residues 23-51 (RPKTKDDVPPASFHGADNANRILRTLWNL) constitute a propeptide that is removed on maturation. Ile-63 carries the post-translational modification Isoleucine amide.

It belongs to the conotoxin T superfamily. Post-translationally, contains 2 disulfide bonds that can be either 'C1-C3, C2-C4' or 'C1-C4, C2-C3', since these disulfide connectivities have been observed for conotoxins with cysteine framework V (for examples, see AC P0DQQ7 and AC P81755). Expressed by the venom duct.

The protein resides in the secreted. In Conus tessulatus (Tessellate cone), this protein is Conotoxin Ts-011.